The chain runs to 374 residues: Glutamate 5-kinase (374 aa).

Lys-9 serves as a coordination point for ATP. Substrate is bound by residues Ser-49, Asp-136, and Asn-148. ATP is bound by residues 168-169 (TD) and 210-216 (TGGMRSK). The 79-residue stretch at 276-354 (SGTITVDSGA…EEARQYSYLH (79 aa)) folds into the PUA domain.

This sequence belongs to the glutamate 5-kinase family.

The protein localises to the cytoplasm. It carries out the reaction L-glutamate + ATP = L-glutamyl 5-phosphate + ADP. Its pathway is amino-acid biosynthesis; L-proline biosynthesis; L-glutamate 5-semialdehyde from L-glutamate: step 1/2. Catalyzes the transfer of a phosphate group to glutamate to form L-glutamate 5-phosphate. This Geobacillus thermodenitrificans (strain NG80-2) protein is Glutamate 5-kinase.